The sequence spans 427 residues: Homeobox protein knotted-1-like 3 (427 aa).

Disordered stretches follow at residues 19–49 (QTHH…QPAP) and 272–291 (TGVS…EDDQ). Polar residues predominate over residues 272-284 (TGVSPGEGTSATM). In terms of domain architecture, ELK spans 330 to 350 (ELKHELKQGYKEKIVDIREEI). Residues 351 to 414 (LRKRRAGKLP…NQRKRNWHSN (64 aa)) constitute a DNA-binding region (homeobox; TALE-type).

It belongs to the TALE/KNOX homeobox family. In terms of tissue distribution, maximally expressed in sepals, petals and fully expanded leaves. Also expressed in other flower organs and in developing leaves. Low level expression in stem internodes.

The protein resides in the nucleus. The polypeptide is Homeobox protein knotted-1-like 3 (Malus domestica (Apple)).